The following is a 420-amino-acid chain: ATP phosphoribosyltransferase regulatory subunit (420 aa).

Belongs to the class-II aminoacyl-tRNA synthetase family. HisZ subfamily. As to quaternary structure, heteromultimer composed of HisG and HisZ subunits.

The protein localises to the cytoplasm. It participates in amino-acid biosynthesis; L-histidine biosynthesis; L-histidine from 5-phospho-alpha-D-ribose 1-diphosphate: step 1/9. Functionally, required for the first step of histidine biosynthesis. May allow the feedback regulation of ATP phosphoribosyltransferase activity by histidine. In Bacillus mycoides (strain KBAB4) (Bacillus weihenstephanensis), this protein is ATP phosphoribosyltransferase regulatory subunit.